We begin with the raw amino-acid sequence, 382 residues long: D-galactonate dehydratase (382 aa).

Residue D183 participates in Mg(2+) binding. H185 functions as the Proton donor in the catalytic mechanism. Mg(2+) contacts are provided by E209 and E235. Residue H285 is the Proton acceptor of the active site.

The protein belongs to the mandelate racemase/muconate lactonizing enzyme family. GalD subfamily. Requires Mg(2+) as cofactor.

The catalysed reaction is D-galactonate = 2-dehydro-3-deoxy-D-galactonate + H2O. It functions in the pathway carbohydrate acid metabolism; D-galactonate degradation; D-glyceraldehyde 3-phosphate and pyruvate from D-galactonate: step 1/3. In terms of biological role, catalyzes the dehydration of D-galactonate to 2-keto-3-deoxy-D-galactonate. The protein is D-galactonate dehydratase of Ralstonia pickettii (strain 12J).